Here is a 336-residue protein sequence, read N- to C-terminus: Speedy protein E1 (336 aa).

A disordered region spans residues 16–50; sequence GVDPSPPCRSLGWKRKREWSDESEEEPEKELAPEP. Positions 36-50 are enriched in acidic residues; that stretch reads DESEEEPEKELAPEP.

The protein belongs to the Speedy/Ringo family. In terms of tissue distribution, predominantly expressed in testis and heart.

This is Speedy protein E1 from Homo sapiens (Human).